The following is a 1249-amino-acid chain: Nuclear envelope pore membrane protein POM 121 (1249 aa).

Positions 1–10 (MSPAAAAAGA) are enriched in low complexity. The interval 1-27 (MSPAAAAAGAGERRRPIASVRDGRGRG) is disordered. The interval 1–34 (MSPAAAAAGAGERRRPIASVRDGRGRGCGGPARA) is cisternal side. The required for targeting to the nucleus and nuclear pore complex stretch occupies residues 1 to 285 (MSPAAAAAGA…APPDRRFSRS (285 aa)). A compositionally biased stretch (basic and acidic residues) spans 11–25 (GERRRPIASVRDGRG). The helical transmembrane segment at 35–55 (VLLGLSLVGLLLYLVPAAAAL) threads the bilayer. The pore side stretch occupies residues 56 to 1249 (AWLTVGATAA…QARRQHTRKK (1194 aa)). Ser-94 carries the phosphoserine modification. Disordered stretches follow at residues 136-220 (LMGS…CGTL), 319-530 (KEKK…LGYS), 602-776 (KKMQ…PVFS), 959-986 (PLPS…AKPA), and 1226-1249 (IGAG…TRKK). A compositionally biased stretch (pro residues) spans 168-190 (ARPAPRSPPPRSPPPRSPPPSPP). 5 positions are modified to phosphoserine: Ser-345, Ser-351, Ser-371, Ser-393, and Ser-396. Polar residues predominate over residues 405–423 (IPSSSRNAITSSYSSTRGI). Low complexity predominate over residues 432 to 445 (PSSSPFSSPASSRS). 2 stretches are compositionally biased toward basic and acidic residues: residues 450–462 (RPAK…ELCH) and 472–486 (ADRE…DTTP). A compositionally biased stretch (polar residues) spans 491–502 (NSNSQSTPGSSG). Low complexity predominate over residues 635 to 652 (PPLGLSQSGPPGLLPSPS). Residues 683–696 (QAETATKPQATSAP) show a composition bias toward polar residues. Composition is skewed to low complexity over residues 712–726 (SPSS…SAPP) and 749–770 (SVTA…TAPT). A compositionally biased stretch (basic residues) spans 1239–1249 (LQARRQHTRKK).

It belongs to the POM121 family.

It is found in the nucleus. The protein resides in the nuclear pore complex. It localises to the nucleus membrane. Its subcellular location is the endoplasmic reticulum membrane. Functionally, essential component of the nuclear pore complex (NPC). The repeat-containing domain may be involved in anchoring components of the pore complex to the pore membrane. When overexpressed in cells induces the formation of cytoplasmic annulate lamellae (AL). This Homo sapiens (Human) protein is Nuclear envelope pore membrane protein POM 121 (POM121).